Reading from the N-terminus, the 264-residue chain is Glutamate racemase (264 aa).

Residues 10–11 and 42–43 each bind substrate; these read DS and YG. The active-site Proton donor/acceptor is Cys-73. 74-75 contributes to the substrate binding site; it reads NT. Catalysis depends on Cys-183, which acts as the Proton donor/acceptor. 184 to 185 provides a ligand contact to substrate; the sequence is TH.

Belongs to the aspartate/glutamate racemases family.

It carries out the reaction L-glutamate = D-glutamate. Its pathway is cell wall biogenesis; peptidoglycan biosynthesis. Functionally, provides the (R)-glutamate required for cell wall biosynthesis. The polypeptide is Glutamate racemase (Streptococcus pyogenes serotype M2 (strain MGAS10270)).